Reading from the N-terminus, the 208-residue chain is Probable nicotinate-nucleotide adenylyltransferase (208 aa).

The protein belongs to the NadD family.

It carries out the reaction nicotinate beta-D-ribonucleotide + ATP + H(+) = deamido-NAD(+) + diphosphate. The protein operates within cofactor biosynthesis; NAD(+) biosynthesis; deamido-NAD(+) from nicotinate D-ribonucleotide: step 1/1. Functionally, catalyzes the reversible adenylation of nicotinate mononucleotide (NaMN) to nicotinic acid adenine dinucleotide (NaAD). The protein is Probable nicotinate-nucleotide adenylyltransferase of Symbiobacterium thermophilum (strain DSM 24528 / JCM 14929 / IAM 14863 / T).